The following is a 313-amino-acid chain: Olfactory receptor 1M1 (313 aa).

The Extracellular portion of the chain corresponds to 1-25 (MEPQNHTSASEFILLGLSEKPDHDP). N5 carries N-linked (GlcNAc...) asparagine glycosylation. The helical transmembrane segment at 26-46 (VLFSLFLCMYMITVVGNLLII) threads the bilayer. Over 47–54 (LAISFDSH) the chain is Cytoplasmic. The helical transmembrane segment at 55–75 (LHTPMYFFLANLSLVDFCLAT) threads the bilayer. Residues 76-97 (NTVPKMLVNIQTRNKSISYPCC) are Extracellular-facing. N-linked (GlcNAc...) asparagine glycosylation is present at N89. The cysteines at positions 97 and 179 are disulfide-linked. Residues 98–118 (LTQMYFFHFFGIMDSVLIAVM) form a helical membrane-spanning segment. At 119–142 (AYDRFVAICHPLHYSTIMSPRLCG) the chain is on the cytoplasmic side. Residues 143–163 (LLVGVPWVYSCFISLTHILLM) form a helical membrane-spanning segment. The Extracellular portion of the chain corresponds to 164 to 196 (ARLVFCGKNELPHYFCDLTPLLRLSCTDTTVNK). A helical membrane pass occupies residues 197–217 (IFVLIVAGMVIATPFVCILAS). The Cytoplasmic segment spans residues 218–244 (YARIIVAIMKVPSAGGRKKAFSTCSSH). A helical transmembrane segment spans residues 245 to 265 (LSVVALFYGTTIGVYLCPSSV). Topologically, residues 266 to 274 (RTAVKEKAS) are extracellular. Residues 275-292 (AVMYTAVTPMLNPFIYSL) traverse the membrane as a helical segment. Residues 293-313 (RNRDLKGALKKIINRKISTSS) are Cytoplasmic-facing.

The protein belongs to the G-protein coupled receptor 1 family. Expressed in testis.

It localises to the cell membrane. Its function is as follows. Odorant receptor. This Mus musculus (Mouse) protein is Olfactory receptor 1M1.